The following is a 268-amino-acid chain: Centromere protein Q (268 aa).

The tract at residues 1–31 (MSGKANASKKNFEQLKRNPKRKKDNEEVVLS) is disordered. Ser-31 carries the phosphoserine modification. A coiled-coil region spans residues 170 to 203 (ELMTGNIQSLKNKIQILASEVEEEEERVKQIHQI). Position 249 is a phosphoserine (Ser-249).

It belongs to the CENP-Q/OKP1 family. As to quaternary structure, component of the CENPA-CAD complex, composed of CENPI, CENPK, CENPL, CENPO, CENPP, CENPQ, CENPR and CENPS. The CENPA-CAD complex interacts with the CENPA-NAC complex, at least composed of CENPA, CENPC, CENPH, CENPM, CENPN, CENPT and CENPU.

It localises to the nucleus. It is found in the chromosome. Its subcellular location is the centromere. Its function is as follows. Component of the CENPA-CAD (nucleosome distal) complex, a complex recruited to centromeres which is involved in assembly of kinetochore proteins, mitotic progression and chromosome segregation. May be involved in incorporation of newly synthesized CENPA into centromeres via its interaction with the CENPA-NAC complex. Plays an important role in chromosome congression and in the recruitment of CENP-O complex (which comprises CENPO, CENPP, CENPQ and CENPU), CENPE and PLK1 to the kinetochores. This chain is Centromere protein Q (CENPQ), found in Macaca fascicularis (Crab-eating macaque).